We begin with the raw amino-acid sequence, 281 residues long: uncharacterized protein (281 aa).

4 helical membrane-spanning segments follow: residues 8–28 (ALPV…FIWS), 97–117 (LAVA…RGYG), 147–167 (PARI…GLAV), and 210–230 (IASV…IVPA).

This sequence to S.pombe bem46 and yeast YNL320w.

Its subcellular location is the cell membrane. This is an uncharacterized protein from Mycobacterium tuberculosis (strain CDC 1551 / Oshkosh).